The following is a 348-amino-acid chain: Phenylalanine--tRNA ligase alpha subunit (348 aa).

E259 contributes to the Mg(2+) binding site.

Belongs to the class-II aminoacyl-tRNA synthetase family. Phe-tRNA synthetase alpha subunit type 1 subfamily. In terms of assembly, tetramer of two alpha and two beta subunits. It depends on Mg(2+) as a cofactor.

The protein resides in the cytoplasm. The enzyme catalyses tRNA(Phe) + L-phenylalanine + ATP = L-phenylalanyl-tRNA(Phe) + AMP + diphosphate + H(+). This is Phenylalanine--tRNA ligase alpha subunit from Lactiplantibacillus plantarum (strain ATCC BAA-793 / NCIMB 8826 / WCFS1) (Lactobacillus plantarum).